The sequence spans 249 residues: Cis-4-hydroxycyclohexanecarboxylate dehydrogenase (249 aa).

NAD(+) contacts are provided by Asp-38, Asp-63, Val-64, Asn-90, Tyr-156, Lys-160, Ala-189, and Thr-191. Tyr-156 serves as the catalytic Proton acceptor.

Belongs to the short-chain dehydrogenases/reductases (SDR) family. Homotetramer.

It catalyses the reaction cis-4-hydroxycyclohexane-1-carboxylate + NAD(+) = 4-oxocyclohexane-1-carboxylate + NADH + H(+). Dehydrogenase involved in a cyclohexanecarboxylate (CHCA) degradation pathway. Catalyzes the NAD(+)-dependent dehydrogenation of cis-4-hydroxycyclohexanecarboxylate (cis-4-hydroxyCHCA) to form 4-oxocyclohexanecarboxylate (4-oxoCHCA). Is highly specific for the cis-4-hydroxy derivative and shows only weak activity with trans-4-hydroxyCHCA. Cannot use NADP(+). The sequence is that of Cis-4-hydroxycyclohexanecarboxylate dehydrogenase from Sinomonas cyclohexanicum (Corynebacterium cyclohexanicum).